The following is an 895-amino-acid chain: Tiger protein D1 (895 aa).

Positions 1–21 are cleaved as a signal peptide; it reads MIHKMYFFLILLFSLFIIVYS. Residues 22–861 are Extracellular-facing; sequence APNRVTRNET…ERKSSKLSGG (840 aa). N-linked (GlcNAc...) asparagine glycans are attached at residues N29, N52, N171, N181, N253, N257, N277, N288, N351, N368, N407, N428, N451, N481, N507, N521, N573, N583, N593, N623, N652, N685, N720, N757, N766, N780, and N799. The 87-residue stretch at 295–381 folds into the IPT/TIG 1 domain; it reads AVISSISSVS…SGSDAVTFTY (87 aa). IPT/TIG domains are found at residues 560–638 and 642–725; these read PKVE…SFYL and PVIY…TLTY. The chain crosses the membrane as a helical span at residues 862–882; sequence AIAGITIGCVAGAGALVGSVF. Residues 883–895 lie on the Cytoplasmic side of the membrane; sequence YFKLITRVKKAFN.

The protein localises to the cell membrane. Functionally, may be involved in the regulation of aggregation. Activates tgrC1. The protein is Tiger protein D1 (tgrD1) of Dictyostelium discoideum (Social amoeba).